Consider the following 352-residue polypeptide: Photosystem II protein D1 (352 aa).

Threonine 2 is subject to N-acetylthreonine. Threonine 2 carries the post-translational modification Phosphothreonine. Transmembrane regions (helical) follow at residues 29–46, 118–133, and 142–156; these read YIGWFGVIMIPTLLTATS, HFLLGVCCYMGREWEL, and WIAVAYSAPVAAATA. Residue histidine 118 coordinates chlorophyll a. Position 126 (tyrosine 126) interacts with pheophytin a. 2 residues coordinate [CaMn4O5] cluster: aspartate 170 and glutamate 189. A helical membrane pass occupies residues 197–218; it reads FHMLGVAGVFGGSLFSAMHGSL. Histidine 198 contributes to the chlorophyll a binding site. A quinone is bound by residues histidine 215 and 264–265; that span reads SF. Histidine 215 provides a ligand contact to Fe cation. Histidine 272 provides a ligand contact to Fe cation. A helical membrane pass occupies residues 274 to 288; the sequence is FLAAWPVVGIWFTAL. Histidine 332, glutamate 333, aspartate 342, and alanine 344 together coordinate [CaMn4O5] cluster. A propeptide spanning residues 345-352 is cleaved from the precursor; the sequence is SVEAPVVG.

The protein belongs to the reaction center PufL/M/PsbA/D family. As to quaternary structure, PSII is composed of 1 copy each of membrane proteins PsbA, PsbB, PsbC, PsbD, PsbE, PsbF, PsbH, PsbI, PsbJ, PsbK, PsbL, PsbM, PsbT, PsbX, PsbY, PsbZ, Psb30/Ycf12, at least 3 peripheral proteins of the oxygen-evolving complex and a large number of cofactors. It forms dimeric complexes. Requires The D1/D2 heterodimer binds P680, chlorophylls that are the primary electron donor of PSII, and subsequent electron acceptors. It shares a non-heme iron and each subunit binds pheophytin, quinone, additional chlorophylls, carotenoids and lipids. D1 provides most of the ligands for the Mn4-Ca-O5 cluster of the oxygen-evolving complex (OEC). There is also a Cl(-1) ion associated with D1 and D2, which is required for oxygen evolution. The PSII complex binds additional chlorophylls, carotenoids and specific lipids. as cofactor. Post-translationally, tyr-161 forms a radical intermediate that is referred to as redox-active TyrZ, YZ or Y-Z. C-terminally processed by CTPA; processing is essential to allow assembly of the oxygen-evolving complex and thus photosynthetic growth.

The protein resides in the plastid. It localises to the chloroplast thylakoid membrane. It catalyses the reaction 2 a plastoquinone + 4 hnu + 2 H2O = 2 a plastoquinol + O2. Functionally, photosystem II (PSII) is a light-driven water:plastoquinone oxidoreductase that uses light energy to abstract electrons from H(2)O, generating O(2) and a proton gradient subsequently used for ATP formation. It consists of a core antenna complex that captures photons, and an electron transfer chain that converts photonic excitation into a charge separation. The D1/D2 (PsbA/PsbD) reaction center heterodimer binds P680, the primary electron donor of PSII as well as several subsequent electron acceptors. This chain is Photosystem II protein D1, found in Zygnema circumcarinatum (Green alga).